The following is a 47-amino-acid chain: Large ribosomal subunit protein bL33 (47 aa).

This sequence belongs to the bacterial ribosomal protein bL33 family.

This Staphylococcus xylosus protein is Large ribosomal subunit protein bL33.